The primary structure comprises 281 residues: Diaminopimelate epimerase (281 aa).

The substrate site is built by N13, Q46, and N66. C75 serves as the catalytic Proton donor. Substrate is bound by residues 76 to 77 (GN), N160, N193, and 211 to 212 (ER). The active-site Proton acceptor is C220. Position 221–222 (221–222 (GT)) interacts with substrate.

It belongs to the diaminopimelate epimerase family. As to quaternary structure, homodimer.

It localises to the cytoplasm. It carries out the reaction (2S,6S)-2,6-diaminopimelate = meso-2,6-diaminopimelate. It functions in the pathway amino-acid biosynthesis; L-lysine biosynthesis via DAP pathway; DL-2,6-diaminopimelate from LL-2,6-diaminopimelate: step 1/1. Functionally, catalyzes the stereoinversion of LL-2,6-diaminopimelate (L,L-DAP) to meso-diaminopimelate (meso-DAP), a precursor of L-lysine and an essential component of the bacterial peptidoglycan. This is Diaminopimelate epimerase from Acinetobacter baumannii (strain ATCC 17978 / DSM 105126 / CIP 53.77 / LMG 1025 / NCDC KC755 / 5377).